A 270-amino-acid polypeptide reads, in one-letter code: 3-methyl-2-oxobutanoate hydroxymethyltransferase (270 aa).

Positions 43 and 82 each coordinate Mg(2+). Residues 43–44 (DS), D82, and K112 contribute to the 3-methyl-2-oxobutanoate site. Residue E114 participates in Mg(2+) binding. Residue E179 is the Proton acceptor of the active site.

The protein belongs to the PanB family. Homodecamer; pentamer of dimers. The cofactor is Mg(2+).

It is found in the cytoplasm. The catalysed reaction is 3-methyl-2-oxobutanoate + (6R)-5,10-methylene-5,6,7,8-tetrahydrofolate + H2O = 2-dehydropantoate + (6S)-5,6,7,8-tetrahydrofolate. It participates in cofactor biosynthesis; (R)-pantothenate biosynthesis; (R)-pantoate from 3-methyl-2-oxobutanoate: step 1/2. Functionally, catalyzes the reversible reaction in which hydroxymethyl group from 5,10-methylenetetrahydrofolate is transferred onto alpha-ketoisovalerate to form ketopantoate. The chain is 3-methyl-2-oxobutanoate hydroxymethyltransferase from Staphylococcus carnosus (strain TM300).